The primary structure comprises 437 residues: Enolase 1 (437 aa).

Gln-164 lines the (2R)-2-phosphoglycerate pocket. The Proton donor role is filled by Glu-206. Positions 244, 289, and 316 each coordinate Mg(2+). 4 residues coordinate (2R)-2-phosphoglycerate: Lys-341, Arg-370, Ser-371, and Lys-392. Lys-341 (proton acceptor) is an active-site residue.

Belongs to the enolase family. It depends on Mg(2+) as a cofactor.

It localises to the cytoplasm. Its subcellular location is the secreted. It is found in the cell surface. The enzyme catalyses (2R)-2-phosphoglycerate = phosphoenolpyruvate + H2O. It functions in the pathway carbohydrate degradation; glycolysis; pyruvate from D-glyceraldehyde 3-phosphate: step 4/5. Its function is as follows. Catalyzes the reversible conversion of 2-phosphoglycerate (2-PG) into phosphoenolpyruvate (PEP). It is essential for the degradation of carbohydrates via glycolysis. The sequence is that of Enolase 1 from Desulfitobacterium hafniense (strain Y51).